Consider the following 103-residue polypeptide: Large ribosomal subunit protein uL24 (103 aa).

Belongs to the universal ribosomal protein uL24 family. As to quaternary structure, part of the 50S ribosomal subunit.

Its function is as follows. One of two assembly initiator proteins, it binds directly to the 5'-end of the 23S rRNA, where it nucleates assembly of the 50S subunit. Functionally, one of the proteins that surrounds the polypeptide exit tunnel on the outside of the subunit. This chain is Large ribosomal subunit protein uL24, found in Bacillus cytotoxicus (strain DSM 22905 / CIP 110041 / 391-98 / NVH 391-98).